Reading from the N-terminus, the 256-residue chain is Thiazole synthase (256 aa).

K98 functions as the Schiff-base intermediate with DXP in the catalytic mechanism. Residues G159, 185–186 (AG), and 207–208 (NT) each bind 1-deoxy-D-xylulose 5-phosphate.

It belongs to the ThiG family. In terms of assembly, homotetramer. Forms heterodimers with either ThiH or ThiS.

It localises to the cytoplasm. It catalyses the reaction [ThiS sulfur-carrier protein]-C-terminal-Gly-aminoethanethioate + 2-iminoacetate + 1-deoxy-D-xylulose 5-phosphate = [ThiS sulfur-carrier protein]-C-terminal Gly-Gly + 2-[(2R,5Z)-2-carboxy-4-methylthiazol-5(2H)-ylidene]ethyl phosphate + 2 H2O + H(+). It functions in the pathway cofactor biosynthesis; thiamine diphosphate biosynthesis. Functionally, catalyzes the rearrangement of 1-deoxy-D-xylulose 5-phosphate (DXP) to produce the thiazole phosphate moiety of thiamine. Sulfur is provided by the thiocarboxylate moiety of the carrier protein ThiS. In vitro, sulfur can be provided by H(2)S. The protein is Thiazole synthase of Aliivibrio fischeri (strain ATCC 700601 / ES114) (Vibrio fischeri).